An 803-amino-acid chain; its full sequence is MPSSPTSTRKQTNFTASVSAQSRKSISFGNPKSTGGKGYAGANQSKIVASRTMTFLPEMKPAEKLNIASAKLVQVLDPRGVDVTPRPLYHPDPHAMPTKPSKLLTSQEGSMGSDYISSYSLYQNTLNPSMLGQYTRSVIGSSSTVSKSSISTTESMTEDLEDPSYKRDRLASFADVRVMRAPAEAAITKEELERNVEIFLMETETLRFFDLPTVMISTDSEEAEKVIEKNINYEILCRNRLGNDLYVERMMQTFNGAPKNKDVQCDKIIMEEKGVMATTWDLYDSFNIPEASLAAKRSAYLSKASLLVRDRDPKIQDSESSSLMDIESVILAKSHEDEEDNSEKILKSDKLHQDLFYMERVLMENVFQPKLAAYRQLPIYKELEPGQPEEDLQVVNKVTEDEVKKDEEEEMETELEIEITTEQSTIPANLERLWSFSCDLTKGLNVSSLSWNKANSDLLAVGYGNFGFKEQKRGMACCWSIKNPMWPERIYQSPYGVTSVDFSISSPNLLAVGYHNGTVAIYNVQSNHNTPVLDSSESPQKHLGPVWQVQWIEQDRGTTGDDRREILVSISADGRISKWVIRKGLDCHDLMHLKRTTVTSSKKGIEKEKKGEALISRQAPGMCFAFHTKDTNIYLAGTEEGLIHKCSCSYNEQYLETYRGHKGPVYKVTWNPFCPDVFLSCSADWGVMIWHQDNVKPFFTFYPTTYVVYDVAWSPKSAYIFAAANENRVEIWDLQISTLDPLIVNVANPGIKFTTVLFAKQTDCLLVGDSDGQVAVYELRNMPTPTESGRGDVINVLLGPKAN.

A compositionally biased stretch (polar residues) spans 1-33; that stretch reads MPSSPTSTRKQTNFTASVSAQSRKSISFGNPKS. Disordered stretches follow at residues 1–41, 88–109, and 143–163; these read MPSS…GYAG, LYHPDPHAMPTKPSKLLTSQEG, and STVSKSSISTTESMTEDLEDP. Low complexity predominate over residues 143-155; the sequence is STVSKSSISTTES. 6 WD repeats span residues 492-532, 541-589, 616-656, 660-700, 703-742, and 748-787; these read QSPY…NTPV, KHLG…DCHD, SRQA…QYLE, GHKG…PFFT, PTTYVVYDVAWSPKSAYIFAAANENRVEIWDLQISTLDPL, and NPGIKFTTVLFAKQTDCLLVGDSDGQVAVYELRNMPTPTE.

As to quaternary structure, part of the multisubunit axonemal dynein complex formed at least of two heavy chains and a number of intermediate and light chains. Associated with axonemal dynein subunits such as, DNAH2, DNAI3, and DYNLT1. Interacts with DYNLT1.

It is found in the cytoplasm. The protein resides in the cytoskeleton. It localises to the flagellum axoneme. The protein localises to the cilium axoneme. Its subcellular location is the dynein axonemal particle. In terms of biological role, plays a critical role in the assembly of axonemal dynein complex, thereby playing a role in ciliary motility. The chain is Dynein axonemal intermediate chain 4 from Rattus norvegicus (Rat).